The following is a 398-amino-acid chain: S-adenosylmethionine synthase (398 aa).

H16 provides a ligand contact to ATP. D18 provides a ligand contact to Mg(2+). K(+) is bound at residue E44. 2 residues coordinate L-methionine: E57 and Q100. The interval 100 to 110 (QSPDIAQGVNE) is flexible loop. ATP contacts are provided by residues 175–177 (DAK), 242–243 (RF), D251, 257–258 (RK), A274, and K278. D251 is a binding site for L-methionine. K282 contributes to the L-methionine binding site.

Belongs to the AdoMet synthase family. Homotetramer; dimer of dimers. Mg(2+) serves as cofactor. It depends on K(+) as a cofactor.

The protein localises to the cytoplasm. The enzyme catalyses L-methionine + ATP + H2O = S-adenosyl-L-methionine + phosphate + diphosphate. It participates in amino-acid biosynthesis; S-adenosyl-L-methionine biosynthesis; S-adenosyl-L-methionine from L-methionine: step 1/1. In terms of biological role, catalyzes the formation of S-adenosylmethionine (AdoMet) from methionine and ATP. The overall synthetic reaction is composed of two sequential steps, AdoMet formation and the subsequent tripolyphosphate hydrolysis which occurs prior to release of AdoMet from the enzyme. This is S-adenosylmethionine synthase from Streptococcus agalactiae serotype Ia (strain ATCC 27591 / A909 / CDC SS700).